Consider the following 479-residue polypeptide: G-rich sequence factor 1 (479 aa).

A mitochondrion-targeting transit peptide spans 1-116; the sequence is MAGTRWVLGA…AAAAGPARGY (116 aa). 2 consecutive RRM domains span residues 149–245 and 249–325; these read YLIR…PSPV and GVVR…PSRR. Ser-243 bears the Phosphoserine mark. Phosphoserine is present on Ser-334. Residues 400-479 form the RRM 3 domain; it reads HFVHMRGLPF…LFLNSCPKGK (80 aa).

In terms of assembly, monomer. Found in a complex with DDX28, DHX30, FASTKD2 and FASTKD5. Interacts with the mitochondrial RNase P complex subunit TRMT10C/MRPP1. Interacts with the 2 components of the mitochondrial degradosome complex, PNPT1 and SUPV3L1, in an RNA-dependent manner.

It localises to the mitochondrion matrix. In terms of biological role, regulator of post-transcriptional mitochondrial gene expression, required for assembly of the mitochondrial ribosome and for recruitment of mRNA and lncRNA. Binds RNAs containing the 14 base G-rich element. Preferentially binds RNAs transcribed from three contiguous genes on the light strand of mtDNA, the ND6 mRNA, and the long non-coding RNAs for MT-CYB and MT-ND5, each of which contains multiple consensus binding sequences. Involved in the degradosome-mediated decay of non-coding mitochondrial transcripts (MT-ncRNA) and tRNA-like molecules. Acts by unwinding G-quadruplex RNA structures in MT-ncRNA, thus facilitating their degradation by the degradosome. G-quadruplexes (G4) are non-canonical 4 stranded structures formed by transcripts from the light strand of mtDNA. The protein is G-rich sequence factor 1 (Grsf1) of Mus musculus (Mouse).